The following is a 112-amino-acid chain: Gastrula zinc finger protein XlCGF16.1 (112 aa).

4 consecutive C2H2-type zinc fingers follow at residues 6–28 (YNCS…QKTH), 34–56 (FVCF…QRIH), 62–84 (FSCT…HKTH), and 90–112 (FLCF…HRTH).

Belongs to the krueppel C2H2-type zinc-finger protein family.

The protein localises to the nucleus. May be involved in transcriptional regulation. The chain is Gastrula zinc finger protein XlCGF16.1 from Xenopus laevis (African clawed frog).